Consider the following 527-residue polypeptide: Berberine bridge enzyme-like 14 (527 aa).

Positions 1–23 are cleaved as a signal peptide; the sequence is MKSSTTQTLIFTVFLLLIPTSFA. A disulfide bridge connects residues cysteine 35 and cysteine 96. 7 N-linked (GlcNAc...) asparagine glycosylation sites follow: asparagine 47, asparagine 72, asparagine 161, asparagine 296, asparagine 328, asparagine 396, and asparagine 481. Residues 74–249 enclose the FAD-binding PCMH-type domain; that stretch reads TTRKPVAIVA…LAWKIKLVPV (176 aa). A cross-link (6-(S-cysteinyl)-8alpha-(pros-histidyl)-FAD (His-Cys)) is located at residues 111-174; the sequence is HDYDGMSYLS…NLRGFPAGIC (64 aa).

This sequence belongs to the oxygen-dependent FAD-linked oxidoreductase family. FAD serves as cofactor. The FAD cofactor is bound via a bicovalent 6-S-cysteinyl, 8alpha-N1-histidyl FAD linkage.

Its subcellular location is the secreted. It is found in the cell wall. In Arabidopsis thaliana (Mouse-ear cress), this protein is Berberine bridge enzyme-like 14.